The chain runs to 129 residues: Large ribosomal subunit protein bL12c (129 aa).

This sequence belongs to the bacterial ribosomal protein bL12 family. In terms of assembly, homodimer. Part of the ribosomal stalk of the 50S ribosomal subunit. Forms a multimeric L10(L12)X complex, where L10 forms an elongated spine to which 2 to 4 L12 dimers bind in a sequential fashion. Binds GTP-bound translation factors.

Its subcellular location is the plastid. The protein localises to the chloroplast. In terms of biological role, forms part of the ribosomal stalk which helps the ribosome interact with GTP-bound translation factors. Is thus essential for accurate translation. This is Large ribosomal subunit protein bL12c from Tupiella akineta (Green alga).